We begin with the raw amino-acid sequence, 942 residues long: NBPF family member NBPF8 (942 aa).

Residues 89 to 130 (AEELRQYKVLVHSQERELTQLKEKLQEGRDASRSLNEHLQAL) adopt a coiled-coil conformation. Positions 161–203 (KLSPENDEDEDEDVQVEEDEKVQKSSAPREVQKAEESKVPEDS) are disordered. The span at 165–180 (ENDEDEDEDVQVEEDE) shows a compositional bias: acidic residues. An Olduvai 1 domain is found at 165–259 (ENDEDEDEDV…ECQDALNILS (95 aa)). A compositionally biased stretch (basic and acidic residues) spans 190–201 (EVQKAEESKVPE). A coiled-coil region spans residues 339–401 (KSMLRNERQF…LSLNEHLQAL (63 aa)). 6 consecutive Olduvai domains span residues 436 to 528 (ENDN…HIIP), 529 to 617 (ENES…ATGP), 620 to 675 (SREL…VDMD), 676 to 767 (EIEK…PPCP), 770 to 843 (SREL…RSKK), and 844 to 904 (KRRR…RSVF). 2 disordered regions span residues 451–474 (EKVQ…PEDS) and 528–566 (PENE…EGYS). Acidic residues-rich tracts occupy residues 530–539 (NESDDEEEEE) and 550–562 (ESEE…ESWD). Residues 831 to 849 (GKGKIRRGRRSKKKRRRGR) show a composition bias toward basic residues. A disordered region spans residues 831–863 (GKGKIRRGRRSKKKRRRGRKEGEEDQNPPCPRL).

Belongs to the NBPF family. In terms of tissue distribution, expressed in the mammary gland.

Its subcellular location is the cytoplasm. The protein is NBPF family member NBPF8 of Homo sapiens (Human).